The chain runs to 185 residues: Homeobox expressed in ES cells 1 (185 aa).

The interval 32–69 (KKDCTTSVRPHRPWTDTCGDSEKGGNPPLHAPDLPSET) is disordered. The homeobox DNA-binding region spans 108–167 (GRRPRTAFTQNQVEVLENVFRVNCYPGIDIREDLAQKLNLEEDRIQIWFQNRRAKMKRSR).

It belongs to the ANF homeobox family. In terms of assembly, can form heterodimers with PROP1 in binding to DNA Interacts with TLE1. As to expression, high levels found in the embryonic liver, lower level expression seen in the viscera, amnion and yolk sac.

It is found in the nucleus. Its function is as follows. Required for the normal development of the forebrain, eyes and other anterior structures such as the olfactory placodes and pituitary gland. Possible transcriptional repressor. Binds to the palindromic PIII sequence, 5'-AGCTTGAGTCTAATTGAATTAACTGTAC-3'. HESX1 and PROP1 bind as heterodimers on this palindromic site, and, in vitro, HESX1 can antagonize PROP1 activation. This is Homeobox expressed in ES cells 1 (Hesx1) from Mus musculus (Mouse).